The chain runs to 767 residues: Cadherin-5 (767 aa).

The N-terminal stretch at M1–G29 is a signal peptide. The propeptide occupies V30–R51. Residues V30–S593 are Extracellular-facing. Ca(2+) is bound by residues E62, E63, D113, and E115. Cadherin domains follow at residues R86 to F155, F155 to F261, K262 to F373, N374 to L475, and L475 to Y581. N121 carries an N-linked (GlcNAc...) asparagine glycan. Positions 147, 148, 149, 150, 151, 180, and 182 each coordinate Ca(2+). A glycan (N-linked (GlcNAc...) asparagine) is linked at N197. D233 is a binding site for Ca(2+). Residues N374, N477, and N518 are each glycosylated (N-linked (GlcNAc...) asparagine). Residues A594 to L614 form a helical membrane-spanning segment. Topologically, residues R615–Y767 are cytoplasmic.

The protein resides in the cell membrane. It localises to the cell junction. It is found in the adherens junction. Cadherins are calcium-dependent cell adhesion proteins. They preferentially interact with themselves in a homophilic manner in connecting cells; cadherins may thus contribute to the sorting of heterogeneous cell types. Required for embryonic cardiac looping and heart chamber development, via promotion of cell-cell junction formation and subsequent attachment between the endothelial and myocardial layers of the heart. Required for the directional migration and delamination of endothelial cell monolayers, by which common cardinal veins form via the lumen ensheathment mechanism of vessel development as they migrate and connect with the heart inflow tract. Required for the formation of filopodia extensions (sprouts) at the initiation of intersegmental vessel development, by acting (via its C-terminus) to facilitate anchoring of the actin cytoskeleton to cell junctions in endothelial cells. Then positively regulates dorsal migration of stalk cells and sprout outgrowth towards the dorsal longitudinal anastomotic vessels (DLAV) via endothelial cell elongation. Following contact with the DLAV, required for intersegmental vessel lumen formation, potentially via facilitating the formation and/or extension of endothelial cell tight junctions that are required during tubulogenesis. In Danio rerio (Zebrafish), this protein is Cadherin-5.